An 898-amino-acid polypeptide reads, in one-letter code: Transportin-1 (898 aa).

An N-acetylmethionine modification is found at Met-1. 20 HEAT repeats span residues 19–46 (GLQQILQLLKESQSPDTTIQRTVQQKLE), 51–89 (YPDFNNYLIFVLTKLKSEDEPTRSLSGLILKNNVKAHFQ), 98–131 (FIKSECLNNIGDSSPLIRATVGILITTIASKGEL), 137–174 (LLPKLCSLLDSEDYNTCEGAFGALQKICEDSAEILDSD), 181–211 (NIMIPKFLQFFKHSSPKIRSHAVACVNQFII), 224–251 (FIENLFALAGDEEPEVRKNVCRALVMLL), 263–290 (HNIVEYMLQRTQDQDENVALEACEFWLT), 306–397 (PKLI…LANV), 405–433 (HILPLLKELLFHHEWVVKESGILVLGAIA), 445–472 (PELIPHLIQCLSDKKALVRSITCWTLSR), 486–519 (LKPLMTELLKRILDSNKRVQEAACSAFATLEEEA), 527–560 (LAYILDTLVFAFSKYQHKNLLILYDAIGTLADSV), 568–606 (EYIQMLMPPLIQKWNMLKDEDKDLFPLLECLSSVATALQ), 614–665 (EPVY…GLGG), 676–707 (ILTLMYQCMQDKMPEVRQSSFALLGDLTKACF), 715–748 (ADFMPILGTNLNPEFISVCNNATWAIGEISIQMG), 756–791 (PMVLHQLVEIINRPNTPKTLLENTAITIGRLGYVCP), 799–832 (QQFIRPWCTSLRNIRDNEEKDSAFRGICTMISVN), 841–872 (IFFCDAVASWINPKDDLRDMFCKILHGFKNQV), and 875–895 (ENWRRFSDQFPLPLKERLAAF). An Importin N-terminal domain is found at 41–109 (VQQKLEQLNQ…KSECLNNIGD (69 aa)). Residues 347 to 374 (FHRSRTVAQQHDEDGIEEEDDDDDEIDD) form a disordered region. The segment covering 360–374 (DGIEEEDDDDDEIDD) has biased composition (acidic residues).

This sequence belongs to the importin beta family. Importin beta-2 subfamily. Identified in a complex that contains TNPO1, RAN and RANBP1. Binds HNRPA1, HNRPA2, HNRNPDL, RPS7, RPL5 and RAN. Interacts with H2A, H2B, H3 and H4 histones. Interacts with isoform 1 and isoform 5 of ADAR/ADAR1 (via DRBM 3 domain). Interacts with SNAI1 (via zinc fingers); the interaction mediates SNAI1 nuclear import. Interacts with SNAI2 (via zinc fingers). Interacts with RPL23A (via BIB domain) and SRP19; this interaction is involved in RPL23A and SRP19 import into the nucleus. Interacts (via HEAT repeats 8-12) with BAP1 (via non-classical PY-NLS); this interaction is direct, is involved in BAP1 nuclear import and disrupts BAP1 homodimerization. In terms of assembly, (Microbial infection) Binds to HIV-1 Rev.

It localises to the cytoplasm. The protein localises to the nucleus. In terms of biological role, functions in nuclear protein import as nuclear transport receptor. Serves as receptor for nuclear localization signals (NLS) in cargo substrates. May mediate docking of the importin/substrate complex to the nuclear pore complex (NPC) through binding to nucleoporin and the complex is subsequently translocated through the pore by an energy requiring, Ran-dependent mechanism. At the nucleoplasmic side of the NPC, Ran binds to the importin, the importin/substrate complex dissociates and importin is re-exported from the nucleus to the cytoplasm where GTP hydrolysis releases Ran. The directionality of nuclear import is thought to be conferred by an asymmetric distribution of the GTP- and GDP-bound forms of Ran between the cytoplasm and nucleus. Involved in nuclear import of M9-containing proteins. In vitro, binds directly to the M9 region of the heterogeneous nuclear ribonucleoproteins (hnRNP), A1 and A2 and mediates their nuclear import. Involved in hnRNP A1/A2 nuclear export. Mediates the nuclear import of ribosomal proteins RPL23A, RPS7 and RPL5. In vitro, mediates nuclear import of H2A, H2B, H3 and H4 histones. In vitro, mediates nuclear import of SRP19. Mediates nuclear import of ADAR/ADAR1 isoform 1 and isoform 5 in a RanGTP-dependent manner. Main mediator of PR-DUB complex component BAP1 nuclear import; acts redundantly with the karyopherins KPNA1 and KPNA2. Functionally, (Microbial infection) In case of HIV-1 infection, binds and mediates the nuclear import of HIV-1 Rev. The chain is Transportin-1 (TNPO1) from Homo sapiens (Human).